An 810-amino-acid polypeptide reads, in one-letter code: Type I restriction enzyme EcoAI endonuclease subunit (810 aa).

Residues 183–343 (EAVSNGQNRV…TDYFGDPVYV (161 aa)) form the Helicase ATP-binding domain. 197-203 (ATGTGKT) serves as a coordination point for ATP. The region spanning 412 to 575 (TITDYLKRTN…DIADPESDFE (164 aa)) is the Helicase C-terminal domain. A compositionally biased stretch (acidic residues) spans 578–588 (LEEISEHDEEQ). A disordered region spans residues 578–608 (LEEISEHDEEQVTGVDEPPAPPYQVTDTDDV).

The protein belongs to the HsdR family. In terms of assembly, the type I restriction/modification system is composed of three polypeptides R, M and S. The restriction enzyme has stoichiometry R(2)M(2)S(1) while the methyltransferase is M(2)S(1).

The catalysed reaction is Endonucleolytic cleavage of DNA to give random double-stranded fragments with terminal 5'-phosphates, ATP is simultaneously hydrolyzed.. The subtype B restriction (R) subunit of a type I restriction enzyme that recognizes 5'-GAGN(7)GTCA-3' and cleaves a random distance away. Subunit R is required for both nuclease and ATPase activities, but not for modification. After locating a non-methylated recognition site, the enzyme complex serves as a molecular motor that translocates DNA in an ATP-dependent manner until a collision occurs that triggers cleavage. The chain is Type I restriction enzyme EcoAI endonuclease subunit from Escherichia coli.